We begin with the raw amino-acid sequence, 74 residues long: Defensin-like protein 39 (74 aa).

Positions 1–28 are cleaved as a signal peptide; that stretch reads MEKKSLAALSFLLLLVLFVAQEIVVTEA. Intrachain disulfides connect C31–C74, C42–C63, C48–C68, and C52–C70.

This sequence belongs to the DEFL family. In terms of tissue distribution, pods.

The protein resides in the secreted. Functionally, possesses antifungal activity. The protein is Defensin-like protein 39 (PI39) of Pisum sativum (Garden pea).